The following is a 629-amino-acid chain: 1-deoxy-D-xylulose-5-phosphate synthase (629 aa).

Thiamine diphosphate contacts are provided by residues histidine 78 and 119–121 (AHS). Aspartate 150 lines the Mg(2+) pocket. Thiamine diphosphate-binding positions include 151 to 152 (GA), asparagine 179, tyrosine 286, and glutamate 368. Asparagine 179 contributes to the Mg(2+) binding site.

The protein belongs to the transketolase family. DXPS subfamily. As to quaternary structure, homodimer. Mg(2+) is required as a cofactor. Thiamine diphosphate serves as cofactor.

It catalyses the reaction D-glyceraldehyde 3-phosphate + pyruvate + H(+) = 1-deoxy-D-xylulose 5-phosphate + CO2. Its pathway is metabolic intermediate biosynthesis; 1-deoxy-D-xylulose 5-phosphate biosynthesis; 1-deoxy-D-xylulose 5-phosphate from D-glyceraldehyde 3-phosphate and pyruvate: step 1/1. Functionally, catalyzes the acyloin condensation reaction between C atoms 2 and 3 of pyruvate and glyceraldehyde 3-phosphate to yield 1-deoxy-D-xylulose-5-phosphate (DXP). The chain is 1-deoxy-D-xylulose-5-phosphate synthase from Acidovorax sp. (strain JS42).